The chain runs to 68 residues: uncharacterized protein (68 aa).

This is an uncharacterized protein from Caenorhabditis elegans.